Here is a 333-residue protein sequence, read N- to C-terminus: C4-dicarboxylate-binding periplasmic protein DctP (333 aa).

Positions 1–26 (MLTRRILGALVGATALSLALSVPALA) are cleaved as a signal peptide.

Belongs to the bacterial solute-binding protein 7 family. In terms of assembly, the complex comprises the extracytoplasmic solute receptor protein DctP, and the two transmembrane proteins DctQ and DctM.

It is found in the periplasm. Its function is as follows. Part of the tripartite ATP-independent periplasmic (TRAP) transport system DctPQM involved in C4-dicarboxylates uptake. Binds C4-dicarboxylates such as fumarate, succinate, L-malate and D-malate. This is C4-dicarboxylate-binding periplasmic protein DctP from Rhodobacter capsulatus (Rhodopseudomonas capsulata).